A 121-amino-acid polypeptide reads, in one-letter code: Small ribosomal subunit protein uS13 (121 aa).

Positions 91 to 121 are disordered; it reads HRKGLPMRGQRTRTNARTRKGPRKAGVALKK.

The protein belongs to the universal ribosomal protein uS13 family. As to quaternary structure, part of the 30S ribosomal subunit. Forms a loose heterodimer with protein S19. Forms two bridges to the 50S subunit in the 70S ribosome.

Functionally, located at the top of the head of the 30S subunit, it contacts several helices of the 16S rRNA. In the 70S ribosome it contacts the 23S rRNA (bridge B1a) and protein L5 of the 50S subunit (bridge B1b), connecting the 2 subunits; these bridges are implicated in subunit movement. Contacts the tRNAs in the A and P-sites. The protein is Small ribosomal subunit protein uS13 of Cupriavidus taiwanensis (strain DSM 17343 / BCRC 17206 / CCUG 44338 / CIP 107171 / LMG 19424 / R1) (Ralstonia taiwanensis (strain LMG 19424)).